Consider the following 663-residue polypeptide: Bifunctional polymyxin resistance protein ArnA (663 aa).

The segment at 1–307 (MSPKAVVFAY…EFGLVEGSQL (307 aa)) is formyltransferase ArnAFT. The active-site Proton donor; for formyltransferase activity is the His-106. Residues Arg-116 and 138-142 (VKRAD) each bind (6R)-10-formyltetrahydrofolate. The tract at residues 317 to 663 (RRTRVLILGV…EAMAEKADMR (347 aa)) is dehydrogenase ArnADH. Residues Asp-350 and 371 to 372 (DI) each bind NAD(+). UDP-alpha-D-glucuronate is bound by residues Ala-396, Tyr-401, and 435–436 (TS). Residue Glu-437 is the Proton acceptor; for decarboxylase activity of the active site. Residues Arg-463, Asn-494, 528–537 (RLVDGGAQKR), and Tyr-615 contribute to the UDP-alpha-D-glucuronate site. Residue Arg-621 is the Proton donor; for decarboxylase activity of the active site.

In the N-terminal section; belongs to the Fmt family. UDP-L-Ara4N formyltransferase subfamily. It in the C-terminal section; belongs to the NAD(P)-dependent epimerase/dehydratase family. UDP-glucuronic acid decarboxylase subfamily. Homohexamer, formed by a dimer of trimers.

The catalysed reaction is UDP-alpha-D-glucuronate + NAD(+) = UDP-beta-L-threo-pentopyranos-4-ulose + CO2 + NADH. The enzyme catalyses UDP-4-amino-4-deoxy-beta-L-arabinose + (6R)-10-formyltetrahydrofolate = UDP-4-deoxy-4-formamido-beta-L-arabinose + (6S)-5,6,7,8-tetrahydrofolate + H(+). The protein operates within nucleotide-sugar biosynthesis; UDP-4-deoxy-4-formamido-beta-L-arabinose biosynthesis; UDP-4-deoxy-4-formamido-beta-L-arabinose from UDP-alpha-D-glucuronate: step 1/3. Its pathway is nucleotide-sugar biosynthesis; UDP-4-deoxy-4-formamido-beta-L-arabinose biosynthesis; UDP-4-deoxy-4-formamido-beta-L-arabinose from UDP-alpha-D-glucuronate: step 3/3. It participates in bacterial outer membrane biogenesis; lipopolysaccharide biosynthesis. Functionally, bifunctional enzyme that catalyzes the oxidative decarboxylation of UDP-glucuronic acid (UDP-GlcUA) to UDP-4-keto-arabinose (UDP-Ara4O) and the addition of a formyl group to UDP-4-amino-4-deoxy-L-arabinose (UDP-L-Ara4N) to form UDP-L-4-formamido-arabinose (UDP-L-Ara4FN). The modified arabinose is attached to lipid A and is required for resistance to polymyxin and cationic antimicrobial peptides. The chain is Bifunctional polymyxin resistance protein ArnA from Pseudomonas savastanoi pv. phaseolicola (strain 1448A / Race 6) (Pseudomonas syringae pv. phaseolicola (strain 1448A / Race 6)).